The sequence spans 226 residues: MTTIKHLAIIMDGNARWADRHNLTKSEGHKAGADKIRELLPEFINLNIPYITLYTFSFENWQRSSSEVDFLIKLLSIYLKNELDSLHENGVKIKVIGRLNLLRSSLQKQINNAIELTKNNNKIKLCIAFSYGSRQEIVDACTKIIAHGKKQVSEYDIQHALYDPEMPDVDLLIRSGGVYRISNFLLWQAAYAELYFSQKYWPDFNKDDIHEAINDYSKRKRTFGKR.

D12 is an active-site residue. D12 provides a ligand contact to Mg(2+). Substrate contacts are provided by residues 13 to 16, W17, K25, H29, and 57 to 59; these read GNAR and SFE. N60 acts as the Proton acceptor in catalysis. Substrate is bound by residues W61, R63, R174, and 180-182; that span reads RIS. E193 provides a ligand contact to Mg(2+).

Belongs to the UPP synthase family. As to quaternary structure, homodimer. The cofactor is Mg(2+).

Catalyzes the condensation of isopentenyl diphosphate (IPP) with allylic pyrophosphates generating different type of terpenoids. In Rickettsia prowazekii (strain Madrid E), this protein is Isoprenyl transferase.